Here is a 462-residue protein sequence, read N- to C-terminus: uncharacterized protein (462 aa).

A disordered region spans residues 1–108; it reads MEDSNTNKDI…NGQDDQDEMD (108 aa). A compositionally biased stretch (basic and acidic residues) spans 36–51; the sequence is TVERILERKQKERESK. Positions 64–95 are enriched in low complexity; that stretch reads SSPSSLLSSPISSNDNNNNNNNNNNESFDINN. A coiled-coil region spans residues 119-150; the sequence is LLKRKAALAAKKKESLAEQMKKYNQQYDSIIS. Positions 188 to 208 are disordered; that stretch reads SKLQSLNNNTSPSTSSSNLID. The span at 190-208 shows a compositional bias: low complexity; it reads LQSLNNNTSPSTSSSNLID.

This is an uncharacterized protein from Dictyostelium discoideum (Social amoeba).